Reading from the N-terminus, the 126-residue chain is Autophagy-related protein 8-like protein DDB_G0290491 (126 aa).

The Phosphatidylethanolamine amidated glycine moiety is linked to residue Gly123. The propeptide at 124–126 (SDI) is removed in mature form.

Belongs to the ATG8 family.

Its subcellular location is the membrane. This chain is Autophagy-related protein 8-like protein DDB_G0290491, found in Dictyostelium discoideum (Social amoeba).